Consider the following 102-residue polypeptide: Co-chaperonin GroES (102 aa).

The protein belongs to the GroES chaperonin family. Heptamer of 7 subunits arranged in a ring. Interacts with the chaperonin GroEL.

The protein resides in the cytoplasm. Functionally, together with the chaperonin GroEL, plays an essential role in assisting protein folding. The GroEL-GroES system forms a nano-cage that allows encapsulation of the non-native substrate proteins and provides a physical environment optimized to promote and accelerate protein folding. GroES binds to the apical surface of the GroEL ring, thereby capping the opening of the GroEL channel. This Streptomyces griseus subsp. griseus (strain JCM 4626 / CBS 651.72 / NBRC 13350 / KCC S-0626 / ISP 5235) protein is Co-chaperonin GroES.